Here is a 1004-residue protein sequence, read N- to C-terminus: Retrovirus-related Pol polyprotein from type-1 retrotransposable element R1 (1004 aa).

Positions 450 to 717 (QCLLESYFPQ…SEVKHLGIFV (268 aa)) constitute a Reverse transcriptase domain. The segment at 853–1004 (LSGSQFKELL…RLMRGMRIRE (152 aa)) is nucleic acid-binding endonuclease.

The enzyme catalyses DNA(n) + a 2'-deoxyribonucleoside 5'-triphosphate = DNA(n+1) + diphosphate. The sequence is that of Retrovirus-related Pol polyprotein from type-1 retrotransposable element R1 from Bradysia coprophila (Dark-winged fungus gnat).